The chain runs to 475 residues: ATP synthase subunit beta (475 aa).

155-162 (GGAGVGKT) provides a ligand contact to ATP.

This sequence belongs to the ATPase alpha/beta chains family. In terms of assembly, F-type ATPases have 2 components, CF(1) - the catalytic core - and CF(0) - the membrane proton channel. CF(1) has five subunits: alpha(3), beta(3), gamma(1), delta(1), epsilon(1). CF(0) has three main subunits: a(1), b(2) and c(9-12). The alpha and beta chains form an alternating ring which encloses part of the gamma chain. CF(1) is attached to CF(0) by a central stalk formed by the gamma and epsilon chains, while a peripheral stalk is formed by the delta and b chains.

Its subcellular location is the cell inner membrane. The enzyme catalyses ATP + H2O + 4 H(+)(in) = ADP + phosphate + 5 H(+)(out). Functionally, produces ATP from ADP in the presence of a proton gradient across the membrane. The catalytic sites are hosted primarily by the beta subunits. This chain is ATP synthase subunit beta, found in Rhizobium etli (strain CIAT 652).